Consider the following 367-residue polypeptide: tRNA-specific 2-thiouridylase MnmA (367 aa).

ATP contacts are provided by residues 12 to 19 (GMSGGVDS) and M38. The tract at residues 98–100 (NPD) is interaction with target base in tRNA. The active-site Nucleophile is the C103. An intrachain disulfide couples C103 to C200. Residue G128 coordinates ATP. The tract at residues 150–152 (KDQ) is interaction with tRNA. C200 serves as the catalytic Cysteine persulfide intermediate. The interval 312–313 (RY) is interaction with tRNA.

It belongs to the MnmA/TRMU family. In terms of assembly, interacts with TusE.

The protein resides in the cytoplasm. It carries out the reaction S-sulfanyl-L-cysteinyl-[protein] + uridine(34) in tRNA + AH2 + ATP = 2-thiouridine(34) in tRNA + L-cysteinyl-[protein] + A + AMP + diphosphate + H(+). Its function is as follows. Catalyzes the 2-thiolation of uridine at the wobble position (U34) of tRNA(Lys), tRNA(Glu) and tRNA(Gln), leading to the formation of s(2)U34, the first step of tRNA-mnm(5)s(2)U34 synthesis. Sulfur is provided by IscS, via a sulfur-relay system. Binds ATP and its substrate tRNAs. The chain is tRNA-specific 2-thiouridylase MnmA from Serratia proteamaculans (strain 568).